The chain runs to 116 residues: uncharacterized protein (116 aa).

A helical transmembrane segment spans residues 52-72 (VFCSANSVPLYLLLLTSALHF).

Its subcellular location is the mitochondrion membrane. This is an uncharacterized protein from Arabidopsis thaliana (Mouse-ear cress).